Consider the following 135-residue polypeptide: Ribosome-binding factor A (135 aa).

The protein belongs to the RbfA family. In terms of assembly, monomer. Binds 30S ribosomal subunits, but not 50S ribosomal subunits or 70S ribosomes.

It localises to the cytoplasm. In terms of biological role, one of several proteins that assist in the late maturation steps of the functional core of the 30S ribosomal subunit. Associates with free 30S ribosomal subunits (but not with 30S subunits that are part of 70S ribosomes or polysomes). Required for efficient processing of 16S rRNA. May interact with the 5'-terminal helix region of 16S rRNA. This Methylobacterium nodulans (strain LMG 21967 / CNCM I-2342 / ORS 2060) protein is Ribosome-binding factor A.